Reading from the N-terminus, the 931-residue chain is Short transient receptor potential channel 6 (931 aa).

Low complexity predominate over residues 1 to 23 (MSQSPAFGPRRGSSPRGAAGAAA). The disordered stretch occupies residues 1–26 (MSQSPAFGPRRGSSPRGAAGAAARRN). The Cytoplasmic portion of the chain corresponds to 1-438 (MSQSPAFGPR…CSKMGKIMRG (438 aa)). ANK repeat units follow at residues 97–126 (IEEE…SLNV), 132–161 (MGQN…LSRV), 163–189 (DALL…FAEG), and 218–247 (HDVT…RIER). A helical transmembrane segment spans residues 439–459 (PFMKFVAHAASFTIFLGLLVM). At 460-487 (NAADRFEGTKLLPNETSTDNAKQLFRMK) the chain is on the extracellular side. Asn473 carries N-linked (GlcNAc...) asparagine glycosylation. The helical transmembrane segment at 488–508 (TSCFSWMEMLIISWVIGMIWA) threads the bilayer. The Cytoplasmic portion of the chain corresponds to 509 to 521 (ECKEIWTQGPKEY). The chain crosses the membrane as a helical span at residues 522 to 542 (LFELWNMLDFGMLAIFAASFI). Residues 543-592 (ARFMAFWHASKAQSIIDANDTLKDLTKVTLGDNVKYYNLARIKWDPSDPQ) lie on the Extracellular side of the membrane. An N-linked (GlcNAc...) asparagine glycan is attached at Asn561. The helical transmembrane segment at 593–613 (IISEGLYAIAVVLSFSRIAYI) threads the bilayer. Over 614–636 (LPANESFGPLQISLGRTVKDIFK) the chain is Cytoplasmic. Residues 637–657 (FMVIFIMVFVAFMIGMFNLYS) form a helical membrane-spanning segment. At 658–706 (YYIGAKQNEAFTTVEESFKTLFWAIFGLSEVKSVVINYNHKFIENIGYV) the chain is on the extracellular side. Residues 707–727 (LYGVYNVTMVIVLLNMLIAMI) form a helical membrane-spanning segment. The Cytoplasmic portion of the chain corresponds to 728–931 (NSSFQEIEDD…MEPNQEETNR (204 aa)). Ser815 carries the phosphoserine modification.

Belongs to the transient receptor (TC 1.A.4) family. STrpC subfamily. TRPC6 sub-subfamily. Homodimer; forms channel complex. Interacts with MX1 and RNF24. Post-translationally, phosphorylated by FYN, leading to an increase of TRPC6 channel activity. As to expression, expressed primarily in placenta, lung, spleen, ovary and small intestine. Expressed in podocytes and is a component of the glomerular slit diaphragm.

Its subcellular location is the cell membrane. The catalysed reaction is Ca(2+)(in) = Ca(2+)(out). Its activity is regulated as follows. Activated by diacylglycerol (DAG) in a membrane-delimited fashion, independently of protein kinase C. In terms of biological role, forms a receptor-activated non-selective calcium permeant cation channel. Probably is operated by a phosphatidylinositol second messenger system activated by receptor tyrosine kinases or G-protein coupled receptors. Activated by diacylglycerol (DAG) in a membrane-delimited fashion, independently of protein kinase C. Seems not to be activated by intracellular calcium store depletion. This chain is Short transient receptor potential channel 6, found in Homo sapiens (Human).